The sequence spans 365 residues: Outer membrane protein assembly factor BamC (365 aa).

Residues 1-19 (MKHNRLAIAALAPVLILVG) form the signal peptide. A lipid anchor (N-palmitoyl cysteine) is attached at Cys-20. Cys-20 is lipidated: S-diacylglycerol cysteine.

This sequence belongs to the BamC family. In terms of assembly, part of the Bam complex.

The protein localises to the cell outer membrane. Its function is as follows. Part of the outer membrane protein assembly complex, which is involved in assembly and insertion of beta-barrel proteins into the outer membrane. This is Outer membrane protein assembly factor BamC from Ferrimonas balearica (strain DSM 9799 / CCM 4581 / KCTC 23876 / PAT).